Consider the following 518-residue polypeptide: uncharacterized protein (518 aa).

ABC transporter domains lie at 4–260 and 324–518; these read LSVK…QLEA and LIFE…TKVL. Residues 36-43 and 357-364 each bind ATP; these read GANGEGKS and GANGIGKT.

This sequence belongs to the ABC transporter superfamily.

This is an uncharacterized protein from Bacillus subtilis (strain 168).